Reading from the N-terminus, the 124-residue chain is Large ribosomal subunit protein bL12 (124 aa).

This sequence belongs to the bacterial ribosomal protein bL12 family. In terms of assembly, homodimer. Part of the ribosomal stalk of the 50S ribosomal subunit. Forms a multimeric L10(L12)X complex, where L10 forms an elongated spine to which 2 to 4 L12 dimers bind in a sequential fashion. Binds GTP-bound translation factors.

Its function is as follows. Forms part of the ribosomal stalk which helps the ribosome interact with GTP-bound translation factors. Is thus essential for accurate translation. The polypeptide is Large ribosomal subunit protein bL12 (Burkholderia lata (strain ATCC 17760 / DSM 23089 / LMG 22485 / NCIMB 9086 / R18194 / 383)).